A 438-amino-acid chain; its full sequence is Serine carboxypeptidase-like 5 (438 aa).

The first 28 residues, 1-28 (MANYISSVLKSLLLLLHLVFLIQQHVDS), serve as a signal peptide directing secretion. Cystine bridges form between Cys-87–Cys-328, Cys-251–Cys-263, and Cys-287–Cys-294. An N-linked (GlcNAc...) asparagine glycan is attached at Asn-108. Ser-183 is a catalytic residue. Asn-347 is a glycosylation site (N-linked (GlcNAc...) asparagine). Residue Asp-363 is part of the active site. Residue Asn-379 is glycosylated (N-linked (GlcNAc...) asparagine). The active site involves His-416.

Belongs to the peptidase S10 family. In terms of tissue distribution, expressed in seedlings, roots, and siliques.

It is found in the secreted. Its function is as follows. Probable carboxypeptidase. This Arabidopsis thaliana (Mouse-ear cress) protein is Serine carboxypeptidase-like 5 (SCPL5).